We begin with the raw amino-acid sequence, 472 residues long: Tryptophanase (472 aa).

Lys270 is subject to N6-(pyridoxal phosphate)lysine.

The protein belongs to the beta-eliminating lyase family. Homotetramer. Pyridoxal 5'-phosphate serves as cofactor.

It catalyses the reaction L-tryptophan + H2O = indole + pyruvate + NH4(+). The protein operates within amino-acid degradation; L-tryptophan degradation via pyruvate pathway; indole and pyruvate from L-tryptophan: step 1/1. In Haemophilus influenzae (strain 86-028NP), this protein is Tryptophanase.